Reading from the N-terminus, the 154-residue chain is Putative pre-16S rRNA nuclease (154 aa).

The protein belongs to the YqgF nuclease family.

It is found in the cytoplasm. Its function is as follows. Could be a nuclease involved in processing of the 5'-end of pre-16S rRNA. The chain is Putative pre-16S rRNA nuclease from Gluconacetobacter diazotrophicus (strain ATCC 49037 / DSM 5601 / CCUG 37298 / CIP 103539 / LMG 7603 / PAl5).